Consider the following 460-residue polypeptide: Proline--tRNA ligase (460 aa).

Belongs to the class-II aminoacyl-tRNA synthetase family. ProS type 3 subfamily. In terms of assembly, homodimer.

It is found in the cytoplasm. The catalysed reaction is tRNA(Pro) + L-proline + ATP = L-prolyl-tRNA(Pro) + AMP + diphosphate. Its function is as follows. Catalyzes the attachment of proline to tRNA(Pro) in a two-step reaction: proline is first activated by ATP to form Pro-AMP and then transferred to the acceptor end of tRNA(Pro). The protein is Proline--tRNA ligase of Methanococcus maripaludis (strain C6 / ATCC BAA-1332).